Consider the following 130-residue polypeptide: Chaperone protein SycT (130 aa).

In terms of assembly, binds to YopT.

Functionally, functions as a specific chaperone for YopT. The sequence is that of Chaperone protein SycT (sycT) from Yersinia enterocolitica.